A 259-amino-acid chain; its full sequence is Secretion system apparatus protein SsaT (259 aa).

A run of 6 helical transmembrane segments spans residues 9-29 (LIALAVAFIRPLSLSLLLPLL), 35-55 (GAALLRNGVLMSLTFPILPII), 78-98 (VIIGFSIGFCAAVPFWAVDMA), 127-147 (LLFSQFLCVIFFISGGMEFIL), 185-205 (ISFSLPAIICMVLADLALGLL), and 214-234 (VFFFSMPLKSILVLLTLLISF).

Belongs to the FliR/MopE/SpaR family.

Its subcellular location is the cell membrane. Functionally, part of a type III secretion system. This is Secretion system apparatus protein SsaT (ssaT) from Salmonella typhimurium (strain LT2 / SGSC1412 / ATCC 700720).